The sequence spans 167 residues: Nascent polypeptide-associated complex subunit beta (167 aa).

2 disordered regions span residues 1–48 (MDQA…GADD) and 133–167 (QNMQ…SKVE). The span at 25-42 (NRNRGKGTPRRKVKKVHK) shows a compositional bias: basic residues. An NAC-A/B domain is found at 45-110 (GADDKKLQAT…GEEKELTELV (66 aa)). The segment covering 148-161 (DEEDDIPDLVEGQD) has biased composition (acidic residues).

This sequence belongs to the NAC-beta family. In terms of assembly, part of the nascent polypeptide-associated complex (NAC), consisting of egd2 and egd1. NAC associates with ribosomes via egd1.

It is found in the cytoplasm. The protein localises to the nucleus. In terms of biological role, component of the nascent polypeptide-associated complex (NAC), a dynamic component of the ribosomal exit tunnel, protecting the emerging polypeptides from interaction with other cytoplasmic proteins to ensure appropriate nascent protein targeting. The NAC complex also promotes mitochondrial protein import by enhancing productive ribosome interactions with the outer mitochondrial membrane and blocks the inappropriate interaction of ribosomes translating non-secretory nascent polypeptides with translocation sites in the membrane of the endoplasmic reticulum. EGD1 may act as a transcription factor that exert a negative effect on the expression of several genes that are transcribed by RNA polymerase II. The sequence is that of Nascent polypeptide-associated complex subunit beta (egd1) from Aspergillus terreus (strain NIH 2624 / FGSC A1156).